Here is a 91-residue protein sequence, read N- to C-terminus: Pyruvate kinase (91 aa).

A substrate-binding site is contributed by Arg48. Residues Asn50, Ser52, Asp82, and Thr83 each contribute to the K(+) site. ATP is bound at residue 50–53 (NFSH). An ATP-binding site is contributed by Arg89.

This sequence belongs to the pyruvate kinase family. Homotetramer. Mg(2+) serves as cofactor. Requires K(+) as cofactor.

It catalyses the reaction pyruvate + ATP = phosphoenolpyruvate + ADP + H(+). The protein operates within carbohydrate degradation; glycolysis; pyruvate from D-glyceraldehyde 3-phosphate: step 5/5. The chain is Pyruvate kinase from Leishmania braziliensis.